A 377-amino-acid polypeptide reads, in one-letter code: Chaperone protein DnaJ (377 aa).

Residues 5-69 form the J domain; it reads EYYDRLGVSK…QKRAAYDQYG (65 aa). The CR-type zinc-finger motif lies at 133 to 215; the sequence is GTEKEVHYNR…CHGTGHEKQS (83 aa). Zn(2+)-binding residues include cysteine 146, cysteine 149, cysteine 163, cysteine 166, cysteine 189, cysteine 192, cysteine 203, and cysteine 206. 4 CXXCXGXG motif repeats span residues 146 to 153, 163 to 170, 189 to 196, and 203 to 210; these read CHTCNGSG, CSKCHGSG, CDVCHGTG, and CPTCHGTG.

The protein belongs to the DnaJ family. As to quaternary structure, homodimer. Zn(2+) is required as a cofactor.

It is found in the cytoplasm. Participates actively in the response to hyperosmotic and heat shock by preventing the aggregation of stress-denatured proteins and by disaggregating proteins, also in an autonomous, DnaK-independent fashion. Unfolded proteins bind initially to DnaJ; upon interaction with the DnaJ-bound protein, DnaK hydrolyzes its bound ATP, resulting in the formation of a stable complex. GrpE releases ADP from DnaK; ATP binding to DnaK triggers the release of the substrate protein, thus completing the reaction cycle. Several rounds of ATP-dependent interactions between DnaJ, DnaK and GrpE are required for fully efficient folding. Also involved, together with DnaK and GrpE, in the DNA replication of plasmids through activation of initiation proteins. The chain is Chaperone protein DnaJ from Streptococcus mutans serotype c (strain ATCC 700610 / UA159).